Here is a 1383-residue protein sequence, read N- to C-terminus: DNA-directed RNA polymerase subunit beta (1383 aa).

This sequence belongs to the RNA polymerase beta chain family. In terms of assembly, the RNAP catalytic core consists of 2 alpha, 1 beta, 1 beta' and 1 omega subunit. When a sigma factor is associated with the core the holoenzyme is formed, which can initiate transcription.

The enzyme catalyses RNA(n) + a ribonucleoside 5'-triphosphate = RNA(n+1) + diphosphate. Its function is as follows. DNA-dependent RNA polymerase catalyzes the transcription of DNA into RNA using the four ribonucleoside triphosphates as substrates. This chain is DNA-directed RNA polymerase subunit beta, found in Xanthomonas axonopodis pv. citri (strain 306).